A 410-amino-acid polypeptide reads, in one-letter code: NADH-quinone oxidoreductase subunit H (410 aa).

9 helical membrane passes run 16 to 36, 84 to 104, 124 to 144, 165 to 185, 198 to 218, 260 to 280, 288 to 308, 320 to 340, and 353 to 373; these read LILA…LAAI, WIYL…FAVI, LPVA…GIVL, VISY…YAGT, VWFI…MVGE, VSAL…PISI, WWPL…FMWL, FMRL…AIVA, and WVTA…LLAW. Residues 384-410 form a disordered region; it reads SHSPPAQSSDHGAFPVPPLPVKEPADA.

The protein belongs to the complex I subunit 1 family. As to quaternary structure, NDH-1 is composed of 14 different subunits. Subunits NuoA, H, J, K, L, M, N constitute the membrane sector of the complex.

It localises to the cell membrane. It catalyses the reaction a quinone + NADH + 5 H(+)(in) = a quinol + NAD(+) + 4 H(+)(out). NDH-1 shuttles electrons from NADH, via FMN and iron-sulfur (Fe-S) centers, to quinones in the respiratory chain. The immediate electron acceptor for the enzyme in this species is believed to be menaquinone. Couples the redox reaction to proton translocation (for every two electrons transferred, four hydrogen ions are translocated across the cytoplasmic membrane), and thus conserves the redox energy in a proton gradient. In Mycolicibacterium gilvum (strain PYR-GCK) (Mycobacterium gilvum (strain PYR-GCK)), this protein is NADH-quinone oxidoreductase subunit H.